The following is a 639-amino-acid chain: Chaperone protein DnaK (639 aa).

Thr-198 is modified (phosphothreonine; by autocatalysis). The segment at 597 to 639 (AYSAGQSAEGAPHAAGAEASAQSRTDDGVVDADFEEVDEKKGH) is disordered. Residues 603–617 (SAEGAPHAAGAEASA) are compositionally biased toward low complexity. Residues 624-633 (GVVDADFEEV) show a composition bias toward acidic residues.

It belongs to the heat shock protein 70 family.

Its function is as follows. Acts as a chaperone. The protein is Chaperone protein DnaK of Rhodospirillum rubrum (strain ATCC 11170 / ATH 1.1.1 / DSM 467 / LMG 4362 / NCIMB 8255 / S1).